Here is a 715-residue protein sequence, read N- to C-terminus: Tegument protein UL46 (715 aa).

Disordered stretches follow at residues 432 to 513, 585 to 605, and 659 to 680; these read WSAG…CAAQ, DDAR…APYE, and GSAL…PSPV. A compositionally biased stretch (gly residues) spans 444-455; sequence GPGGHRAGGGTV. Low complexity-rich tracts occupy residues 456–467 and 475–488; these read GKRFSGPARQRA and PTLD…VPEA. The span at 664-677 shows a compositional bias: pro residues; that stretch reads SPPPRPPPPPPLSP.

The protein belongs to the herpesviridae HHV-1 VP11/12 protein family. In terms of assembly, interacts with VP16. Interacts with host LCK, PIK3R1, SHC1 AND GRB2; these interactions promote the activation of the PI3K/AKT pathway. Interacts with host YWHAB. Interacts with ICP0; this interaction targets UL46 for degradation by the proteasome. In terms of processing, phosphorylated by host LCK. The phosphorylation seems to be lymphocyte-specific.

The protein localises to the virion tegument. The protein resides in the host cell membrane. Plays a role in the activation of the host PI3K/AKT pathway to promote cell survival. Interacts with and activates host LCK and thereby recruits downstream partners SHC1, GRB2 and PI3KR1 in order to activate the PI3K pathway by phosphorylating host AKT on its activating residues. This mechanism is inhibited by the viral protein US3 that instead promotes incorporation of UL46 into virions. In Human herpesvirus 1 (strain F) (HHV-1), this protein is Tegument protein UL46.